A 144-amino-acid polypeptide reads, in one-letter code: Large ribosomal subunit protein uL15 (144 aa).

Residues 1–57 (MLLNTLSPAAGSKHAPKRLGRGVGSGLGKTGGRGHKGQKSRSGGKVRPGFEGGQMPL) are disordered. A compositionally biased stretch (gly residues) spans 21 to 31 (RGVGSGLGKTG). The segment covering 32–44 (GRGHKGQKSRSGG) has biased composition (basic residues).

This sequence belongs to the universal ribosomal protein uL15 family. In terms of assembly, part of the 50S ribosomal subunit.

Its function is as follows. Binds to the 23S rRNA. The chain is Large ribosomal subunit protein uL15 from Vibrio cholerae serotype O1 (strain ATCC 39541 / Classical Ogawa 395 / O395).